A 1170-amino-acid polypeptide reads, in one-letter code: Cellulose synthase-like protein D2 (1170 aa).

2 disordered regions span residues 1 to 75 (MASN…PESG) and 269 to 295 (NEVDNGGGGGGGGGLGGGDGQPAEFTS). The segment covering 10–24 (RHSNSSRLSRMSYSG) has biased composition (low complexity). The segment covering 273–288 (NGGGGGGGGGLGGGDG) has biased composition (gly residues). The next 2 membrane-spanning stretches (helical) occupy residues 311 to 331 (VLSPYRLLILIRMAVLGLFLA) and 341 to 361 (AMWLWGMSVVCELWFGLSWLL). Residue Asp-441 is part of the active site. Residues 527–551 (HAREEIKAMKRQREAALDDVVEAVK) are a coiled coil. Residue Asp-873 is part of the active site. 6 consecutive transmembrane segments (helical) span residues 955 to 975 (IFLIVYCFLPALSLFSGQFIV), 981 to 1001 (TFLTYLLVITLTMCMLAVLEI), 1027 to 1047 (LAAVLQGLLKVIAGIEISFTL), 1070 to 1090 (SLMIPPIVIMMVNLIAIAVGF), 1104 to 1124 (LLGGVFFSFWVLAHLYPFAKG), and 1134 to 1154 (TIVFVWSGLLAITISLLWVAI).

This sequence belongs to the glycosyltransferase 2 family. Plant cellulose synthase-like D subfamily.

Its subcellular location is the golgi apparatus membrane. Thought to be a Golgi-localized beta-glycan synthase that polymerize the backbones of noncellulosic polysaccharides (hemicelluloses) of plant cell wall. In Oryza sativa subsp. indica (Rice), this protein is Cellulose synthase-like protein D2 (CSLD2).